Here is a 516-residue protein sequence, read N- to C-terminus: DNA topoisomerase large subunit (516 aa).

128–136 provides a ligand contact to ATP; it reads VTGGMNGVG. Residues 369–400 mediate DNA binding; it reads AALARKLAAEKAAETKAAKKASKAKVHKHIKA.

The protein belongs to the type II topoisomerase family. As to quaternary structure, part of the DNA topoisomerase complex made of gp39, gp52 and gp60. Mg(2+) serves as cofactor.

The enzyme catalyses ATP-dependent breakage, passage and rejoining of double-stranded DNA.. Functionally, large subunit of the DNA topoisomerase that untwists superhelical DNA. Controls of topological states of double-stranded DNA by transient breakage and subsequent rejoining of DNA strands. The sequence is that of DNA topoisomerase large subunit (39) from Escherichia coli (Bacteriophage T4).